The chain runs to 213 residues: MKFFIDTANLEEIKKANELGILAGVTTNPSLVAKENVPFHDRLREITSIVSGSVSAEVISTDAEGMIEEGEELAKIAPNITIKVPMTKEGLKAVKVFSEKGIKTNVTLIFTANQALLAARAGATYVSPFLGRLDDIGHNGFELISTIADIFNIHGIDTEIIAASIRHPLHVTEAALRGAHIATVPYKVLMQLFNHPLTDQGIEKFLADWNRQK.

Residue Lys83 is the Schiff-base intermediate with substrate of the active site.

The protein belongs to the transaldolase family. Type 3B subfamily.

The protein resides in the cytoplasm. The enzyme catalyses D-sedoheptulose 7-phosphate + D-glyceraldehyde 3-phosphate = D-erythrose 4-phosphate + beta-D-fructose 6-phosphate. It functions in the pathway carbohydrate degradation; pentose phosphate pathway; D-glyceraldehyde 3-phosphate and beta-D-fructose 6-phosphate from D-ribose 5-phosphate and D-xylulose 5-phosphate (non-oxidative stage): step 2/3. In terms of biological role, transaldolase is important for the balance of metabolites in the pentose-phosphate pathway. The protein is Probable transaldolase of Geobacillus sp. (strain WCH70).